The primary structure comprises 635 residues: Cilia- and flagella-associated protein 206 (635 aa).

It belongs to the CFAP206 family.

It is found in the cytoplasm. The protein resides in the cytoskeleton. Its subcellular location is the cilium axoneme. May regulate cilium motility through its role in the assembly of the axonemal RS2 radial spoke. This is Cilia- and flagella-associated protein 206 from Tetrahymena thermophila (strain SB210).